The primary structure comprises 236 residues: Uridylate kinase (236 aa).

8-11 (KLSG) contributes to the ATP binding site. An involved in allosteric activation by GTP region spans residues 16–21 (GEQGYG). 2 residues coordinate ATP: Gly-51 and Arg-55. Residues Asp-70 and 131-138 (TGNPYFST) contribute to the UMP site. Positions 159, 165, and 168 each coordinate ATP.

This sequence belongs to the UMP kinase family. Homohexamer.

It localises to the cytoplasm. The enzyme catalyses UMP + ATP = UDP + ADP. The protein operates within pyrimidine metabolism; CTP biosynthesis via de novo pathway; UDP from UMP (UMPK route): step 1/1. Its activity is regulated as follows. Allosterically activated by GTP. Inhibited by UTP. Its function is as follows. Catalyzes the reversible phosphorylation of UMP to UDP. This is Uridylate kinase from Shouchella clausii (strain KSM-K16) (Alkalihalobacillus clausii).